The sequence spans 62 residues: UPF0434 protein FTM_0733 (62 aa).

This sequence belongs to the UPF0434 family.

This chain is UPF0434 protein FTM_0733, found in Francisella tularensis subsp. mediasiatica (strain FSC147).